A 335-amino-acid chain; its full sequence is Partner of xrn-2 protein 1 (335 aa).

One can recognise an XRN2-binding (XTBD) domain in the interval 7 to 91; the sequence is VEAEKKLWES…SYVKASAAKK (85 aa). The tract at residues 95–119 is disordered; that stretch reads VKTSDLEGASDESKKVKMEKSPSPV. Positions 105–114 are enriched in basic and acidic residues; it reads DESKKVKMEK.

As to quaternary structure, interacts (via N-terminus) with xrn-2; the interaction is direct.

The protein resides in the nucleus. Its subcellular location is the nucleolus. It is found in the nucleoplasm. Functionally, plays a role in maintenance of steady-state concentration and turnover of microRNAs (miRNA) by degradation of mature miRNA in complex with the exoribonuclease xrn-2. Stabilizes and enhances the accumulation and activity of the exoribonuclease xrn-2, and thus contributes to miRNA turnover. The sequence is that of Partner of xrn-2 protein 1 from Caenorhabditis elegans.